The chain runs to 250 residues: uncharacterized protein (250 aa).

The ABC transporter domain maps to 7 to 244 (LKVEDLHVYR…YKKECGKCYK (238 aa)). 39–46 (GPNGAGKS) provides a ligand contact to ATP.

The protein belongs to the ABC transporter superfamily.

This is an uncharacterized protein from Methanocaldococcus jannaschii (strain ATCC 43067 / DSM 2661 / JAL-1 / JCM 10045 / NBRC 100440) (Methanococcus jannaschii).